The chain runs to 716 residues: RNA-directed RNA polymerase catalytic subunit (716 aa).

Residues 286–465 (SSKLEAVSEV…GINMSPSKCI (180 aa)) form the RdRp catalytic domain.

This sequence belongs to the influenza viruses polymerase PB1 family. In terms of assembly, RNA polymerase is composed of three subunits: PA, PB1 and PB2.

The catalysed reaction is RNA(n) + a ribonucleoside 5'-triphosphate = RNA(n+1) + diphosphate. The polypeptide is RNA-directed RNA polymerase catalytic subunit (P2) (Dhori virus (strain Indian/1313/61) (Dho)).